A 589-amino-acid chain; its full sequence is Poly(3-hydroxyalkanoate) polymerase subunit PhaC (589 aa).

A disordered region spans residues 1-23 (MATGKGAAASTQEGKSQPFKVTP). Cys-319 is a catalytic residue.

It belongs to the PHA/PHB synthase family. Type I PhaC subfamily. Monomer.

The protein resides in the cytoplasm. It carries out the reaction (3R)-3-hydroxybutanoyl-CoA + [(3R)-hydroxybutanoate](n) = [(3R)-hydroxybutanoate](n+1) + CoA. Its pathway is biopolymer metabolism; poly-(R)-3-hydroxybutanoate biosynthesis. Polymerizes (R)-3-hydroxybutyryl-CoA to create polyhydroxybutyrate (PHB) which consists of thousands of hydroxybutyrate molecules linked end to end. PHB serves as an intracellular energy reserve material when cells grow under conditions of nutrient limitation. The protein is Poly(3-hydroxyalkanoate) polymerase subunit PhaC of Cupriavidus necator (strain ATCC 17699 / DSM 428 / KCTC 22496 / NCIMB 10442 / H16 / Stanier 337) (Ralstonia eutropha).